Here is a 409-residue protein sequence, read N- to C-terminus: Pectin acetylesterase 4 (409 aa).

The N-terminal stretch at 1 to 32 (MVIRSLLQCRTWSKSDWLLASIGIVLIVYSFS) is a signal peptide. N-linked (GlcNAc...) asparagine glycosylation is found at Asn-36 and Asn-163. Residues Ser-199, Asp-295, and His-362 each act as charge relay system in the active site. N-linked (GlcNAc...) asparagine glycosylation is found at Asn-379 and Asn-406.

It belongs to the pectinacetylesterase family.

The protein localises to the secreted. It localises to the cell wall. In terms of biological role, hydrolyzes acetyl esters in homogalacturonan regions of pectin. In type I primary cell wall, galacturonic acid residues of pectin can be acetylated at the O-2 and O-3 positions. Decreasing the degree of acetylation of pectin gels in vitro alters their physical properties. The sequence is that of Pectin acetylesterase 4 from Arabidopsis thaliana (Mouse-ear cress).